Here is a 200-residue protein sequence, read N- to C-terminus: NADH-quinone oxidoreductase subunit C (200 aa).

It belongs to the complex I 30 kDa subunit family. NDH-1 is composed of 14 different subunits. Subunits NuoB, C, D, E, F, and G constitute the peripheral sector of the complex.

Its subcellular location is the cell inner membrane. It carries out the reaction a quinone + NADH + 5 H(+)(in) = a quinol + NAD(+) + 4 H(+)(out). In terms of biological role, NDH-1 shuttles electrons from NADH, via FMN and iron-sulfur (Fe-S) centers, to quinones in the respiratory chain. The immediate electron acceptor for the enzyme in this species is believed to be ubiquinone. Couples the redox reaction to proton translocation (for every two electrons transferred, four hydrogen ions are translocated across the cytoplasmic membrane), and thus conserves the redox energy in a proton gradient. This chain is NADH-quinone oxidoreductase subunit C, found in Chelativorans sp. (strain BNC1).